Here is a 361-residue protein sequence, read N- to C-terminus: Phenylalanine--tRNA ligase alpha subunit (361 aa).

Residue glutamate 260 coordinates Mg(2+).

It belongs to the class-II aminoacyl-tRNA synthetase family. Phe-tRNA synthetase alpha subunit type 1 subfamily. Tetramer of two alpha and two beta subunits. Requires Mg(2+) as cofactor.

The protein resides in the cytoplasm. It carries out the reaction tRNA(Phe) + L-phenylalanine + ATP = L-phenylalanyl-tRNA(Phe) + AMP + diphosphate + H(+). This chain is Phenylalanine--tRNA ligase alpha subunit, found in Chelativorans sp. (strain BNC1).